Here is a 94-residue protein sequence, read N- to C-terminus: Acylphosphatase (94 aa).

The Acylphosphatase-like domain occupies Ala7–Gly94. Residues Arg22 and Asn40 contribute to the active site.

The protein belongs to the acylphosphatase family.

It catalyses the reaction an acyl phosphate + H2O = a carboxylate + phosphate + H(+). In Rhizobium etli (strain ATCC 51251 / DSM 11541 / JCM 21823 / NBRC 15573 / CFN 42), this protein is Acylphosphatase (acyP).